Reading from the N-terminus, the 204-residue chain is Inactive ribonuclease-like protein 9 (204 aa).

The signal sequence occupies residues 1–26; it reads MMRTLITTHPLLLLLLLQQLLQPVQL. 3 disulfide bridges follow: cysteine 97/cysteine 152, cysteine 115/cysteine 167, and cysteine 122/cysteine 129. N-linked (GlcNAc...) asparagine glycosylation is found at asparagine 130 and asparagine 142.

It belongs to the pancreatic ribonuclease family.

It is found in the secreted. Functionally, does not exhibit any ribonuclease activity. This Chlorocebus aethiops (Green monkey) protein is Inactive ribonuclease-like protein 9 (RNASE9).